The following is a 340-amino-acid chain: Tryptophan--tRNA ligase (340 aa).

ATP contacts are provided by residues 11–13 (RPT) and 19–20 (GH). The 'HIGH' region motif lies at 12 to 20 (PTGKLHLGH). Aspartate 140 is a binding site for L-tryptophan. Residues 152–154 (GND), leucine 194, and 202–206 (KMSKS) contribute to the ATP site. Residues 202–206 (KMSKS) carry the 'KMSKS' region motif.

Belongs to the class-I aminoacyl-tRNA synthetase family. In terms of assembly, homodimer.

The protein resides in the cytoplasm. It catalyses the reaction tRNA(Trp) + L-tryptophan + ATP = L-tryptophyl-tRNA(Trp) + AMP + diphosphate + H(+). Its function is as follows. Catalyzes the attachment of tryptophan to tRNA(Trp). The protein is Tryptophan--tRNA ligase of Streptococcus pyogenes serotype M1.